A 260-amino-acid polypeptide reads, in one-letter code: Spectinomycin 9-adenylyltransferase (260 aa).

It carries out the reaction spectinomycin + ATP = 9-O-adenylylspectinomycin + diphosphate. Its function is as follows. Mediates bacterial resistance to the antibiotic spectinomycin but not streptomycin. This chain is Spectinomycin 9-adenylyltransferase (ant1), found in Staphylococcus aureus (strain Mu50 / ATCC 700699).